The primary structure comprises 781 residues: Zinc finger protein klf1 (781 aa).

2 consecutive C2H2-type zinc fingers follow at residues 17-41 (YKCD…FRSH) and 47-70 (FICP…NQKH).

The protein localises to the nucleus. Its subcellular location is the cytoplasm. The protein resides in the cytoskeleton. It is found in the spindle. Its function is as follows. Required for maintaining cell viability in nitrogen-deficient stationary phase (G0) cells. This chain is Zinc finger protein klf1 (klf1), found in Schizosaccharomyces pombe (strain 972 / ATCC 24843) (Fission yeast).